The following is a 300-amino-acid chain: Epimerase family protein SAR0825 (300 aa).

This sequence belongs to the NAD(P)-dependent epimerase/dehydratase family. SDR39U1 subfamily.

This chain is Epimerase family protein SAR0825, found in Staphylococcus aureus (strain MRSA252).